A 247-amino-acid polypeptide reads, in one-letter code: Acetate transporter protein patA (247 aa).

Asparagine 20 carries N-linked (GlcNAc...) asparagine glycosylation. 6 helical membrane-spanning segments follow: residues 37 to 57 (PPITPIGSPTALGMGAFAIAF), 71 to 91 (AITNAYIGNCFFTAGLGLVLV), 106 to 126 (VFGGFGLFNLAFGAINAPAFG), 141 to 161 (ALGYFLLVWGVFVLFFTIAAM), 169 to 189 (AMLGTSQITYTLLAASYFAMA), and 202 to 222 (AAGAFGFVSGLLAWYVVAHLM).

The protein belongs to the acetate uptake transporter (AceTr) (TC 2.A.96) family.

The protein localises to the endoplasmic reticulum membrane. Its pathway is mycotoxin biosynthesis; patulin biosynthesis. Acetate transporter protein; part of the gene cluster that mediates the biosynthesis of patulin, an acetate-derived tetraketide mycotoxin produced by several fungal species that shows antimicrobial properties against several bacteria. May be involved in the uptake of acetate, a substrate for the synthesis of 6-methylsalicylic acid by the polyketide synthase patK. The sequence is that of Acetate transporter protein patA from Aspergillus clavatus (strain ATCC 1007 / CBS 513.65 / DSM 816 / NCTC 3887 / NRRL 1 / QM 1276 / 107).